The primary structure comprises 109 residues: Spermidine export protein MdtI (109 aa).

4 helical membrane-spanning segments follow: residues 6-26 (WVHG…NVLL), 36-56 (CYGI…SQAV), 64-84 (AYAL…WVLF), and 88-108 (LNPK…MIKL).

Belongs to the drug/metabolite transporter (DMT) superfamily. Small multidrug resistance (SMR) (TC 2.A.7.1) family. MdtI subfamily. As to quaternary structure, forms a complex with MdtJ.

It localises to the cell inner membrane. Catalyzes the excretion of spermidine. This Salmonella arizonae (strain ATCC BAA-731 / CDC346-86 / RSK2980) protein is Spermidine export protein MdtI.